A 353-amino-acid chain; its full sequence is D-alanine--D-alanine ligase A (353 aa).

The 206-residue stretch at 141 to 346 (KRLVNEAGLS…YPEIINRLVA (206 aa)) folds into the ATP-grasp domain. 169–224 (EQALGLPIFIKPARQGSSVGVHKVVTEADYQAAMSDGFTYDDKLLAEEFIQAREVE) contacts ATP. Residues D300, E313, and N315 each contribute to the Mg(2+) site.

This sequence belongs to the D-alanine--D-alanine ligase family. Mg(2+) is required as a cofactor. The cofactor is Mn(2+).

The protein localises to the cytoplasm. The enzyme catalyses 2 D-alanine + ATP = D-alanyl-D-alanine + ADP + phosphate + H(+). The protein operates within cell wall biogenesis; peptidoglycan biosynthesis. Cell wall formation. The sequence is that of D-alanine--D-alanine ligase A from Brucella suis biovar 1 (strain 1330).